A 570-amino-acid chain; its full sequence is Urease subunit alpha (570 aa).

Residues 132–570 (GGIDTHVHFI…LPMAQRYFLF (439 aa)) form the Urease domain. His137 and His139 together coordinate Ni(2+). Positions 139 and 170 each coordinate substrate. A Ni(2+)-binding site is contributed by Lys220. Lys220 is modified (N6-carboxylysine). Residues His222 and His249 each coordinate substrate. The Ni(2+) site is built by His249 and His275. The Proton donor role is filled by His323. Ni(2+) is bound at residue Asp363. Ala366 provides a ligand contact to substrate.

The protein belongs to the metallo-dependent hydrolases superfamily. Urease alpha subunit family. In terms of assembly, heterotrimer of UreA (gamma), UreB (beta) and UreC (alpha) subunits. Three heterotrimers associate to form the active enzyme. Ni cation is required as a cofactor. Carboxylation allows a single lysine to coordinate two nickel ions.

Its subcellular location is the cytoplasm. The catalysed reaction is urea + 2 H2O + H(+) = hydrogencarbonate + 2 NH4(+). The protein operates within nitrogen metabolism; urea degradation; CO(2) and NH(3) from urea (urease route): step 1/1. With respect to regulation, inhibited by fluoride. The polypeptide is Urease subunit alpha (Sporosarcina pasteurii (Bacillus pasteurii)).